We begin with the raw amino-acid sequence, 458 residues long: UDP-N-acetylmuramoylalanine--D-glutamate ligase (458 aa).

124–130 (GSDGKTT) lines the ATP pocket.

This sequence belongs to the MurCDEF family.

The protein localises to the cytoplasm. It catalyses the reaction UDP-N-acetyl-alpha-D-muramoyl-L-alanine + D-glutamate + ATP = UDP-N-acetyl-alpha-D-muramoyl-L-alanyl-D-glutamate + ADP + phosphate + H(+). It participates in cell wall biogenesis; peptidoglycan biosynthesis. Its function is as follows. Cell wall formation. Catalyzes the addition of glutamate to the nucleotide precursor UDP-N-acetylmuramoyl-L-alanine (UMA). This is UDP-N-acetylmuramoylalanine--D-glutamate ligase from Clostridium botulinum (strain Alaska E43 / Type E3).